Reading from the N-terminus, the 174-residue chain is MRKEECFYLGKIAKKFSFKGEVLIYLDTDEPELYENLESVFVEHNKHLVPFFIETSSLHKGDFLRVRFEDVNTEEDADAIVGNSIYLPLTMLPKLTGNKFYFHEVIGFEIEDKRLGVFGKITSINDSSAQPLFEVLNGEVEILVPMIDHFLVKIDRENKKVIMDLPVGLVEMYL.

Positions 97–173 (GNKFYFHEVI…DLPVGLVEMY (77 aa)) constitute a PRC barrel domain.

It belongs to the RimM family. As to quaternary structure, binds ribosomal protein uS19.

The protein localises to the cytoplasm. Functionally, an accessory protein needed during the final step in the assembly of 30S ribosomal subunit, possibly for assembly of the head region. Essential for efficient processing of 16S rRNA. May be needed both before and after RbfA during the maturation of 16S rRNA. It has affinity for free ribosomal 30S subunits but not for 70S ribosomes. The protein is Ribosome maturation factor RimM of Flavobacterium johnsoniae (strain ATCC 17061 / DSM 2064 / JCM 8514 / BCRC 14874 / CCUG 350202 / NBRC 14942 / NCIMB 11054 / UW101) (Cytophaga johnsonae).